Here is a 187-residue protein sequence, read N- to C-terminus: UPF0301 protein VS_2679 (187 aa).

This sequence belongs to the UPF0301 (AlgH) family.

This Vibrio atlanticus (strain LGP32) (Vibrio splendidus (strain Mel32)) protein is UPF0301 protein VS_2679.